A 464-amino-acid polypeptide reads, in one-letter code: Protein phosphatase 2C homolog 2 (464 aa).

Residues 23–292 (AFGLCAMQGW…DNMSIVVVAL (270 aa)) enclose the PPM-type phosphatase domain. Residues Asp62, Gly63, Asp234, and Asp283 each contribute to the Mn(2+) site. An interaction with IRE1 region spans residues 174–355 (DGFVEMDRVN…KPQDKFTRDH (182 aa)). Disordered regions lie at residues 361–398 (SVTAADNDDPMDIDDTDADTDAENLDPSSQSKSKTSGP) and 434–464 (QLLQTMGHDPASSHPENDSNTDHKAGRSHLQ). Residues 366–384 (DNDDPMDIDDTDADTDAEN) show a composition bias toward acidic residues. Phosphothreonine occurs at positions 376 and 380. Over residues 386 to 396 (DPSSQSKSKTS) the composition is skewed to polar residues. A compositionally biased stretch (basic and acidic residues) spans 448-458 (PENDSNTDHKA).

The protein belongs to the PP2C family. Interacts with IRE1 (when phosphorylated); the interaction is direct and serves to attenuate the endoplasmic reticulum unfolded protein response. Interacts (when phosphorylated) with RAD53 (via domain FHA 1); the interaction is direct and serves to regulate DNA damage checkpoint signaling. Interacts with the ATG17-ATG29-ATG31 and ATG1-ATG13 supercomplex; to regulate induction of autophagy. Mg(2+) is required as a cofactor. The cofactor is Mn(2+).

It localises to the nucleus. It is found in the cytoplasm. The protein localises to the cytosol. It carries out the reaction O-phospho-L-seryl-[protein] + H2O = L-seryl-[protein] + phosphate. It catalyses the reaction O-phospho-L-threonyl-[protein] + H2O = L-threonyl-[protein] + phosphate. Dephosphorylating regulator for many key proteins. Dephosphorylates the cell cycle master regulator CDC28/cyclin-dependent kinase 1; its activity appears redundant with phosphatase PTC3. Dephosphorylates HOG1 at 'Thr-171', to attenuate activation of the stress-activated p38MAPK cascade; its activity appears redundant with phosphatase PTC3. Positively regulates both nonselective macroautophagy as well as the selective cytoplasm-to-vacuole (cvt) autophagy pathway and the genotoxin-induced targeted autophagy (GTA) pathway, possibly by dephosphorylating ATG13 to enable the interaction between the ATG17-ATG29-ATG31 and ATG1-ATG13 complexes; its activity appears redundant with phosphatase PTC3. Dephosphorylates RAD53, to regulate DNA damage checkpoint signaling. Dephosphorylates IRE1, to negatively regulate the endoplasmic reticulum unfolded protein response. The sequence is that of Protein phosphatase 2C homolog 2 (PTC2) from Saccharomyces cerevisiae (strain ATCC 204508 / S288c) (Baker's yeast).